The following is a 469-amino-acid chain: 3-isopropylmalate dehydratase large subunit (469 aa).

3 residues coordinate [4Fe-4S] cluster: Cys-347, Cys-408, and Cys-411.

The protein belongs to the aconitase/IPM isomerase family. LeuC type 1 subfamily. Heterodimer of LeuC and LeuD. [4Fe-4S] cluster serves as cofactor.

The catalysed reaction is (2R,3S)-3-isopropylmalate = (2S)-2-isopropylmalate. It participates in amino-acid biosynthesis; L-leucine biosynthesis; L-leucine from 3-methyl-2-oxobutanoate: step 2/4. Its function is as follows. Catalyzes the isomerization between 2-isopropylmalate and 3-isopropylmalate, via the formation of 2-isopropylmaleate. The polypeptide is 3-isopropylmalate dehydratase large subunit (Actinobacillus pleuropneumoniae serotype 7 (strain AP76)).